Consider the following 201-residue polypeptide: Large ribosomal subunit protein uL4 (201 aa).

Residues 44–68 (RAQKSRAEVSGSGRKPWRQKGTGRA) form a disordered region.

This sequence belongs to the universal ribosomal protein uL4 family. Part of the 50S ribosomal subunit.

One of the primary rRNA binding proteins, this protein initially binds near the 5'-end of the 23S rRNA. It is important during the early stages of 50S assembly. It makes multiple contacts with different domains of the 23S rRNA in the assembled 50S subunit and ribosome. In terms of biological role, forms part of the polypeptide exit tunnel. This is Large ribosomal subunit protein uL4 from Buchnera aphidicola subsp. Acyrthosiphon pisum (strain 5A).